The primary structure comprises 339 residues: Phenylalanine--tRNA ligase alpha subunit (339 aa).

Mg(2+) is bound at residue Glu253.

The protein belongs to the class-II aminoacyl-tRNA synthetase family. Phe-tRNA synthetase alpha subunit type 1 subfamily. Tetramer of two alpha and two beta subunits. The cofactor is Mg(2+).

It localises to the cytoplasm. The catalysed reaction is tRNA(Phe) + L-phenylalanine + ATP = L-phenylalanyl-tRNA(Phe) + AMP + diphosphate + H(+). The chain is Phenylalanine--tRNA ligase alpha subunit from Chromohalobacter salexigens (strain ATCC BAA-138 / DSM 3043 / CIP 106854 / NCIMB 13768 / 1H11).